The following is a 273-amino-acid chain: Type IV secretion system protein PtlF homolog (273 aa).

The signal sequence occupies residues 1-20 (MMAARMMAAGLAATALSAHA).

Belongs to the TrbG/VirB9 family.

The protein resides in the cell outer membrane. This Bordetella bronchiseptica (strain ATCC BAA-588 / NCTC 13252 / RB50) (Alcaligenes bronchisepticus) protein is Type IV secretion system protein PtlF homolog (ptlF).